The following is a 319-amino-acid chain: Lipoyl synthase (319 aa).

Residues 1-12 (MVTIVDTLSNTP) are compositionally biased toward polar residues. The interval 1 to 32 (MVTIVDTLSNTPLRPRHPEKANRPDSISPAKP) is disordered. Positions 61, 66, 72, 87, 91, 94, and 300 each coordinate [4Fe-4S] cluster. Residues 73–289 (WDKKHATFMI…ETVAYTKGFL (217 aa)) form the Radical SAM core domain.

This sequence belongs to the radical SAM superfamily. Lipoyl synthase family. [4Fe-4S] cluster is required as a cofactor.

It is found in the cytoplasm. It carries out the reaction [[Fe-S] cluster scaffold protein carrying a second [4Fe-4S](2+) cluster] + N(6)-octanoyl-L-lysyl-[protein] + 2 oxidized [2Fe-2S]-[ferredoxin] + 2 S-adenosyl-L-methionine + 4 H(+) = [[Fe-S] cluster scaffold protein] + N(6)-[(R)-dihydrolipoyl]-L-lysyl-[protein] + 4 Fe(3+) + 2 hydrogen sulfide + 2 5'-deoxyadenosine + 2 L-methionine + 2 reduced [2Fe-2S]-[ferredoxin]. It participates in protein modification; protein lipoylation via endogenous pathway; protein N(6)-(lipoyl)lysine from octanoyl-[acyl-carrier-protein]: step 2/2. Its function is as follows. Catalyzes the radical-mediated insertion of two sulfur atoms into the C-6 and C-8 positions of the octanoyl moiety bound to the lipoyl domains of lipoate-dependent enzymes, thereby converting the octanoylated domains into lipoylated derivatives. The polypeptide is Lipoyl synthase (Bradyrhizobium sp. (strain BTAi1 / ATCC BAA-1182)).